The sequence spans 584 residues: Endoribonuclease YBEY, chloroplastic (584 aa).

The N-terminal 50 residues, 1–50 (MLSRVCPTLRYNRIWSAHAREMPRATLLLLQPNFFHSSPKTALVNRLDVT), are a transit peptide targeting the chloroplast. Residues histidine 240, histidine 244, and histidine 250 each coordinate Zn(2+).

The protein belongs to the endoribonuclease YbeY family. Zn(2+) serves as cofactor.

Its subcellular location is the plastid. It is found in the chloroplast stroma. Functionally, endoribonuclease required for chloroplast ribosomal RNA (rRNA) processing and essential for normal growth and development. May be involved in maturation of both the 5' and 3' ends of 16S, 23S, and 4.5S rRNAs. Cleaves chloroplast rRNAs, mRNAs and tRNAs in vitro. The polypeptide is Endoribonuclease YBEY, chloroplastic (Arabidopsis thaliana (Mouse-ear cress)).